Consider the following 138-residue polypeptide: uncharacterized protein (138 aa).

Residues 3–72 (LYSISKAAEK…LEDINEFVKD (70 aa)) form the HTH merR-type domain. Positions 6–25 (ISKAAEKTSISSYTLRYYEK) form a DNA-binding region, H-T-H motif.

This is an uncharacterized protein from Bacillus subtilis (strain 168).